A 648-amino-acid polypeptide reads, in one-letter code: Macrolide export ATP-binding/permease protein MacB (648 aa).

The 239-residue stretch at leucine 5–threonine 243 folds into the ABC transporter domain. Glycine 41–serine 48 is an ATP binding site. The next 5 membrane-spanning stretches (helical) occupy residues leucine 273 to glycine 293, alanine 417 to alanine 437, leucine 523 to isoleucine 543, valine 577 to methionine 597, and leucine 611 to leucine 631.

Belongs to the ABC transporter superfamily. Macrolide exporter (TC 3.A.1.122) family. As to quaternary structure, homodimer. Part of the tripartite efflux system MacAB-TolC, which is composed of an inner membrane transporter, MacB, a periplasmic membrane fusion protein, MacA, and an outer membrane component, TolC. The complex forms a large protein conduit and can translocate molecules across both the inner and outer membranes. Interacts with MacA.

It localises to the cell inner membrane. Its function is as follows. Part of the tripartite efflux system MacAB-TolC. MacB is a non-canonical ABC transporter that contains transmembrane domains (TMD), which form a pore in the inner membrane, and an ATP-binding domain (NBD), which is responsible for energy generation. Confers resistance against macrolides. In Salmonella typhi, this protein is Macrolide export ATP-binding/permease protein MacB.